Consider the following 165-residue polypeptide: UPF0114 protein Ent638_3411 (165 aa).

3 helical membrane-spanning segments follow: residues 15 to 35 (LLAP…IKFF), 53 to 73 (LILV…LVMV), and 136 to 156 (LMWY…MGYL).

It belongs to the UPF0114 family.

The protein resides in the cell membrane. The chain is UPF0114 protein Ent638_3411 from Enterobacter sp. (strain 638).